We begin with the raw amino-acid sequence, 327 residues long: GTPase Obg (327 aa).

Positions H2–I160 constitute an Obg domain. The OBG-type G domain maps to A161–K326. GTP-binding positions include G167–S174, F192–I196, D213–G216, S280–D283, and S307–Y309. Positions 174 and 194 each coordinate Mg(2+).

The protein belongs to the TRAFAC class OBG-HflX-like GTPase superfamily. OBG GTPase family. In terms of assembly, monomer. Requires Mg(2+) as cofactor.

Its subcellular location is the cytoplasm. An essential GTPase which binds GTP, GDP and possibly (p)ppGpp with moderate affinity, with high nucleotide exchange rates and a fairly low GTP hydrolysis rate. Plays a role in control of the cell cycle, stress response, ribosome biogenesis and in those bacteria that undergo differentiation, in morphogenesis control. The polypeptide is GTPase Obg (Borrelia recurrentis (strain A1)).